A 594-amino-acid polypeptide reads, in one-letter code: Elongation factor 4 (594 aa).

The region spanning 2 to 184 (KNIRNFSIIA…TIVAKVPAPE (183 aa)) is the tr-type G domain. GTP is bound by residues 14–19 (DHGKST) and 131–134 (NKID).

This sequence belongs to the TRAFAC class translation factor GTPase superfamily. Classic translation factor GTPase family. LepA subfamily.

It localises to the cell inner membrane. It carries out the reaction GTP + H2O = GDP + phosphate + H(+). In terms of biological role, required for accurate and efficient protein synthesis under certain stress conditions. May act as a fidelity factor of the translation reaction, by catalyzing a one-codon backward translocation of tRNAs on improperly translocated ribosomes. Back-translocation proceeds from a post-translocation (POST) complex to a pre-translocation (PRE) complex, thus giving elongation factor G a second chance to translocate the tRNAs correctly. Binds to ribosomes in a GTP-dependent manner. The polypeptide is Elongation factor 4 (Francisella tularensis subsp. novicida (strain U112)).